Here is a 211-residue protein sequence, read N- to C-terminus: Large ribosomal subunit protein uL4 (211 aa).

A disordered region spans residues 44–94 (RSGNHATKTRSEVRGGGKKPWSQKGTGHARQGSTRAPHWVGGGTVHGPQKR).

It belongs to the universal ribosomal protein uL4 family. In terms of assembly, part of the 50S ribosomal subunit.

Its function is as follows. One of the primary rRNA binding proteins, this protein initially binds near the 5'-end of the 23S rRNA. It is important during the early stages of 50S assembly. It makes multiple contacts with different domains of the 23S rRNA in the assembled 50S subunit and ribosome. Functionally, forms part of the polypeptide exit tunnel. This chain is Large ribosomal subunit protein uL4, found in Leptospira borgpetersenii serovar Hardjo-bovis (strain JB197).